A 136-amino-acid polypeptide reads, in one-letter code: Small ribosomal subunit protein uS9 (136 aa).

It belongs to the universal ribosomal protein uS9 family.

In Borrelia duttonii (strain Ly), this protein is Small ribosomal subunit protein uS9.